A 120-amino-acid polypeptide reads, in one-letter code: NAD(P)H-quinone oxidoreductase subunit 3, chloroplastic (120 aa).

3 helical membrane-spanning segments follow: residues 10 to 30 (FLVF…ASKL), 64 to 84 (MFAL…PWAV), and 89 to 109 (MGFI…VGLV).

Belongs to the complex I subunit 3 family. In terms of assembly, NDH is composed of at least 16 different subunits, 5 of which are encoded in the nucleus.

It is found in the plastid. Its subcellular location is the chloroplast thylakoid membrane. The enzyme catalyses a plastoquinone + NADH + (n+1) H(+)(in) = a plastoquinol + NAD(+) + n H(+)(out). It carries out the reaction a plastoquinone + NADPH + (n+1) H(+)(in) = a plastoquinol + NADP(+) + n H(+)(out). Functionally, NDH shuttles electrons from NAD(P)H:plastoquinone, via FMN and iron-sulfur (Fe-S) centers, to quinones in the photosynthetic chain and possibly in a chloroplast respiratory chain. The immediate electron acceptor for the enzyme in this species is believed to be plastoquinone. Couples the redox reaction to proton translocation, and thus conserves the redox energy in a proton gradient. In Chlorokybus atmophyticus (Soil alga), this protein is NAD(P)H-quinone oxidoreductase subunit 3, chloroplastic.